The sequence spans 184 residues: Ribosome maturation factor RimP (184 aa).

It belongs to the RimP family.

It is found in the cytoplasm. Functionally, required for maturation of 30S ribosomal subunits. This is Ribosome maturation factor RimP from Corynebacterium diphtheriae (strain ATCC 700971 / NCTC 13129 / Biotype gravis).